The following is a 613-amino-acid chain: DBH-like monooxygenase protein 1 (613 aa).

A signal peptide spans 1 to 19 (MCCWPLLLLWGLLPGTAAG). Residues 20 to 592 (GSGRTYPHRT…TSSSSSLHRD (573 aa)) are Lumenal-facing. Positions 35-148 (GKYWLGWSQR…STVRVIWAYH (114 aa)) constitute a DOMON domain. N-linked (GlcNAc...) asparagine glycosylation occurs at Asn114. Tyr203 is an active-site residue. 2 cysteine pairs are disulfide-bonded: Cys205/Cys257 and Cys242/Cys269. Positions 235 and 236 each coordinate Cu cation. A glycan (N-linked (GlcNAc...) asparagine) is linked at Asn247. Cu cation contacts are provided by His307, His389, His391, and Met464. 3 disulfides stabilise this stretch: Cys364-Cys480, Cys368-Cys550, and Cys443-Cys465. Residue His389 is part of the active site. Residues Asn476 and Asn517 are each glycosylated (N-linked (GlcNAc...) asparagine). The helical transmembrane segment at 593-613 (FSINLLVCLLLLSCTLSTKSL) threads the bilayer.

The protein belongs to the copper type II ascorbate-dependent monooxygenase family. Requires Cu(2+) as cofactor. In terms of processing, N-glycosylated. Highly expressed in lung, kidney, brain and spinal cord.

It localises to the endoplasmic reticulum membrane. This is DBH-like monooxygenase protein 1 (MOXD1) from Homo sapiens (Human).